The following is a 626-amino-acid chain: Fructose-1,6-bisphosphatase class 3 (626 aa).

Belongs to the FBPase class 3 family. Mn(2+) is required as a cofactor.

It carries out the reaction beta-D-fructose 1,6-bisphosphate + H2O = beta-D-fructose 6-phosphate + phosphate. It functions in the pathway carbohydrate biosynthesis; gluconeogenesis. The chain is Fructose-1,6-bisphosphatase class 3 from Enterococcus faecalis (strain ATCC 700802 / V583).